Consider the following 207-residue polypeptide: Protein-L-isoaspartate O-methyltransferase (207 aa).

Ser56 is an active-site residue.

Belongs to the methyltransferase superfamily. L-isoaspartyl/D-aspartyl protein methyltransferase family.

The protein resides in the cytoplasm. The enzyme catalyses [protein]-L-isoaspartate + S-adenosyl-L-methionine = [protein]-L-isoaspartate alpha-methyl ester + S-adenosyl-L-homocysteine. Catalyzes the methyl esterification of L-isoaspartyl residues in peptides and proteins that result from spontaneous decomposition of normal L-aspartyl and L-asparaginyl residues. It plays a role in the repair and/or degradation of damaged proteins. The chain is Protein-L-isoaspartate O-methyltransferase from Pyrobaculum neutrophilum (strain DSM 2338 / JCM 9278 / NBRC 100436 / V24Sta) (Thermoproteus neutrophilus).